Reading from the N-terminus, the 255-residue chain is tRNA (guanine-N(1)-)-methyltransferase (255 aa).

Residues Gly-113 and 133–138 (IGDYVL) contribute to the S-adenosyl-L-methionine site.

The protein belongs to the RNA methyltransferase TrmD family. In terms of assembly, homodimer.

It localises to the cytoplasm. The catalysed reaction is guanosine(37) in tRNA + S-adenosyl-L-methionine = N(1)-methylguanosine(37) in tRNA + S-adenosyl-L-homocysteine + H(+). Functionally, specifically methylates guanosine-37 in various tRNAs. The sequence is that of tRNA (guanine-N(1)-)-methyltransferase from Serratia proteamaculans (strain 568).